Consider the following 360-residue polypeptide: UPF0324 membrane protein DVU_0123 (360 aa).

The next 10 membrane-spanning stretches (helical) occupy residues 20–42, 57–79, 100–122, 142–164, 171–193, 203–225, 232–254, 278–297, 310–327, and 337–359; these read VTES…FVAP, KDFI…PAVF, SYSL…VFLF, AACL…APAV, MAYS…PLIG, FGAF…FGFS, AGIY…AIMA, FPLF…AGVL, EWAF…TRLS, and FLFG…LLFM.

It belongs to the UPF0324 family.

Its subcellular location is the cell membrane. This is UPF0324 membrane protein DVU_0123 from Nitratidesulfovibrio vulgaris (strain ATCC 29579 / DSM 644 / CCUG 34227 / NCIMB 8303 / VKM B-1760 / Hildenborough) (Desulfovibrio vulgaris).